The sequence spans 517 residues: C-22 sterol desaturase ERG5 (517 aa).

A helical transmembrane segment spans residues Leu21–Ile41. Cys458 contacts heme.

Belongs to the cytochrome P450 family. The cofactor is heme.

It is found in the endoplasmic reticulum membrane. The enzyme catalyses 5-dehydroepisterol + NADPH + O2 + H(+) = ergosta-5,7,22,24(28)-tetraen-3beta-ol + NADP(+) + 2 H2O. Its pathway is steroid metabolism; ergosterol biosynthesis; ergosterol from zymosterol: step 4/5. In terms of biological role, C-22 sterol desaturase; part of the third module of ergosterol biosynthesis pathway that includes the late steps of the pathway. ERG5 converts 5-dehydroepisterol into ergosta-5,7,22,24(28)-tetraen-3beta-ol by forming the C-22(23) double bond in the sterol side chain. The third module or late pathway involves the ergosterol synthesis itself through consecutive reactions that mainly occur in the endoplasmic reticulum (ER) membrane. Firstly, the squalene synthase ERG9 catalyzes the condensation of 2 farnesyl pyrophosphate moieties to form squalene, which is the precursor of all steroids. Squalene synthase is crucial for balancing the incorporation of farnesyl diphosphate (FPP) into sterol and nonsterol isoprene synthesis. Secondly, the squalene epoxidase ERG1 catalyzes the stereospecific oxidation of squalene to (S)-2,3-epoxysqualene, which is considered to be a rate-limiting enzyme in steroid biosynthesis. Then, the lanosterol synthase ERG7 catalyzes the cyclization of (S)-2,3 oxidosqualene to lanosterol, a reaction that forms the sterol core. In the next steps, lanosterol is transformed to zymosterol through a complex process involving various demethylation, reduction and desaturation reactions. The lanosterol 14-alpha-demethylase ERG11 (also known as CYP51) catalyzes C14-demethylation of lanosterol to produce 4,4'-dimethyl cholesta-8,14,24-triene-3-beta-ol, which is critical for ergosterol biosynthesis. The C-14 reductase ERG24 reduces the C14=C15 double bond of 4,4-dimethyl-cholesta-8,14,24-trienol to produce 4,4-dimethyl-cholesta-8,24-dienol. 4,4-dimethyl-cholesta-8,24-dienol is substrate of the C-4 demethylation complex ERG25-ERG26-ERG27 in which ERG25 catalyzes the three-step monooxygenation required for the demethylation of 4,4-dimethyl and 4alpha-methylsterols, ERG26 catalyzes the oxidative decarboxylation that results in a reduction of the 3-beta-hydroxy group at the C-3 carbon to an oxo group, and ERG27 is responsible for the reduction of the keto group on the C-3. ERG28 has a role as a scaffold to help anchor ERG25, ERG26 and ERG27 to the endoplasmic reticulum and ERG29 regulates the activity of the iron-containing C4-methylsterol oxidase ERG25. Then, the sterol 24-C-methyltransferase ERG6 catalyzes the methyl transfer from S-adenosyl-methionine to the C-24 of zymosterol to form fecosterol. The C-8 sterol isomerase ERG2 catalyzes the reaction which results in unsaturation at C-7 in the B ring of sterols and thus converts fecosterol to episterol. The sterol-C5-desaturase ERG3 then catalyzes the introduction of a C-5 double bond in the B ring to produce 5-dehydroepisterol. The C-22 sterol desaturase ERG5 further converts 5-dehydroepisterol into ergosta-5,7,22,24(28)-tetraen-3beta-ol by forming the C-22(23) double bond in the sterol side chain. Finally, ergosta-5,7,22,24(28)-tetraen-3beta-ol is substrate of the C-24(28) sterol reductase ERG4 to produce ergosterol. The polypeptide is C-22 sterol desaturase ERG5 (Candida albicans (strain SC5314 / ATCC MYA-2876) (Yeast)).